The chain runs to 314 residues: NF-kappa-B inhibitor alpha (314 aa).

Positions 1–39 are disordered; it reads MFQPAGHGQDWAMEGPRDGLKKERLVDDRHDSGLDSMKD. Basic and acidic residues predominate over residues 15 to 39; the sequence is GPRDGLKKERLVDDRHDSGLDSMKD. Lys21 is covalently cross-linked (Glycyl lysine isopeptide (Lys-Gly) (interchain with G-Cter in SUMO); alternate). Residue Lys21 forms a Glycyl lysine isopeptide (Lys-Gly) (interchain with G-Cter in ubiquitin); alternate linkage. Residue Lys22 forms a Glycyl lysine isopeptide (Lys-Gly) (interchain with G-Cter in ubiquitin) linkage. The Destruction motif signature appears at 30-36; the sequence is HDSGLDS. Residue Ser32 is modified to Phosphoserine; by IKKA and IKKB. Ser36 is subject to Phosphoserine; by IKKA, IKKB, IKKE and TBK1. Tyr42 carries the post-translational modification Phosphotyrosine; by Tyr-kinases. Residues 45–54 carry the Nuclear export signal motif; the sequence is MVKELREIRL. Residues 110 to 120 carry the Nuclear import signal motif; that stretch reads LQQTPLHLAVI. ANK repeat units lie at residues 110-139, 143-172, 182-211, and 216-245; these read LQQT…DPEL, RGNT…PQHL, NGHT…DVNA, and NGRT…DVNR. (3S)-3-hydroxyasparagine; by HIF1AN occurs at positions 210 and 244. Residues Ser283 and Ser288 each carry the phosphoserine; by CK2 modification. Residue Thr291 is modified to Phosphothreonine; by CK2. Ser293 is modified (phosphoserine; by CK2). The residue at position 296 (Thr296) is a Phosphothreonine.

It belongs to the NF-kappa-B inhibitor family. In terms of assembly, interacts with RELA; the interaction requires the nuclear import signal. Part of a 70-90 kDa complex at least consisting of CHUK, IKBKB, NFKBIA, RELA, ELP1 and MAP3K14. Interacts with NKIRAS1 and NKIRAS2. Interacts with RWDD3; the interaction enhances sumoylation. Interacts with PRMT2. Interacts with PRKACA in platelets; this interaction is disrupted by thrombin and collagen. Interacts with MEFV. Interacts with DDRGK1; positively regulates NFKBIA phosphorylation and degradation. Interacts with HNRNPA2B1; the interaction may be mediated by the RRM2 domain of HNRNPA2B1, and HNRNPA2B1 may interact simultaneously with FAM76B and either NFKBIA or NFKBIE to form a complex. In terms of processing, phosphorylated at Ser-32 and Ser-36 by IKKA/CHUK and IKKB/IKBKB; disables inhibition of NF-kappa-B DNA-binding activity. Phosphorylation at positions 32 and 36 is prerequisite to recognition by the SCF(FBXW11) and SCF(BTRC) complexes, leading to polyubiquitination and subsequent degradation. Polyubiquitinated at Lys-21 and/or Lys-22 following phosphorylation at Ser-32 and Ser-36. Monoubiquitinated at Lys-21 and/or Lys-22 by UBE2D3. Ubiquitin chain elongation is then performed by CDC34 in cooperation with the SCF(FBXW11) E3 ligase complex, building ubiquitin chains from the UBE2D3-primed NFKBIA-linked ubiquitin. The resulting polyubiquitination leads to protein degradation. Also ubiquitinated by the SCF(BTRC) complex following stimulus-dependent phosphorylation at Ser-32 and Ser-36. Deubiquitinated by USP38, leading to NF-kappa-B inhibition. Post-translationally, sumoylated; sumoylation requires the presence of the nuclear import signal. Sumoylation blocks ubiquitination and proteasome-mediated degradation of the protein thereby increasing the protein stability. In terms of processing, hydroxylated by HIF1AN.

Its subcellular location is the cytoplasm. It is found in the nucleus. Functionally, inhibits the activity of dimeric NF-kappa-B/REL complexes by trapping REL (RELA/p65 and NFKB1/p50) dimers in the cytoplasm by masking their nuclear localization signals. On cellular stimulation by immune and pro-inflammatory responses, becomes phosphorylated promoting ubiquitination and degradation, enabling the dimeric RELA to translocate to the nucleus and activate transcription. The protein is NF-kappa-B inhibitor alpha (Nfkbia) of Rattus norvegicus (Rat).